The primary structure comprises 501 residues: ADP,ATP carrier protein 3 (501 aa).

A run of 12 helical transmembrane segments spans residues 23 to 43 (LKLF…FGAL), 59 to 79 (IISF…TILY), 90 to 110 (YIFY…AYII), 146 to 166 (YALM…LMFW), 183 to 203 (PVLG…LVFF), 227 to 247 (IMLQ…MFLF), 293 to 313 (IALL…PWKA), 326 to 346 (VNFM…FMII), 361 to 381 (LLTP…IIFI), 383 to 403 (EIGT…VGAI), 446 to 466 (FGKS…PTAT), and 470 to 490 (IIIY…WNII).

The protein belongs to the ADP/ATP translocase tlc family.

Its subcellular location is the cell membrane. Its function is as follows. Provides the rickettsial cell with host ATP in exchange for rickettsial ADP. This is an obligate exchange system. This energy acquiring activity is an important component of rickettsial parasitism. This is ADP,ATP carrier protein 3 (tlcC) from Rickettsia prowazekii (strain Madrid E).